Here is a 31-residue protein sequence, read N- to C-terminus: Chassatide C6 (31 aa).

The cyclopeptide (Gly-Asn) cross-link spans 1–31 (GVIPCGESCVFIPCISSVIGCSCKNKVCYRN). 3 cysteine pairs are disulfide-bonded: Cys5-Cys21, Cys9-Cys23, and Cys14-Cys28.

This is a cyclic peptide. Expressed in fruit, pedicel, root and stem but not in leaf (at protein level).

In terms of biological role, probably participates in a plant defense mechanism. This Chassalia chartacea (Chassalia curviflora) protein is Chassatide C6.